We begin with the raw amino-acid sequence, 149 residues long: MGSPIAASFLLFLAVQLLGQTGANPVYGSVSNADLLDFKNLLDRLEDKMPLEDEAESPQALSEQNAEAGAALSPLPEVPPWTGEVSPAQRDGGALGRSPWDSSDRSALLKSKLRALLAAPRSLRRSSCFGGRMDRIGAQSGLGCNSFRY.

The first 23 residues, 1–23, serve as a signal peptide directing secretion; that stretch reads MGSPIAASFLLFLAVQLLGQTGA. 2 consecutive propeptides follow at residues 24 to 121 and 91 to 101; these read NPVY…AAPR and DGGALGRSPWD. The interval 49–103 is disordered; the sequence is MPLEDEAESPQALSEQNAEAGAALSPLPEVPPWTGEVSPAQRDGGALGRSPWDSS. Phosphoserine is present on serine 127. A disulfide bridge links cysteine 128 with cysteine 144. Residues 145–149 form an important for degradation of atrial natriuretic peptide by IDE region; it reads NSFRY.

The protein belongs to the natriuretic peptide family. As to quaternary structure, homodimer; disulfide-linked antiparallel dimer. In terms of processing, the precursor molecule is proteolytically cleaved by CORIN at Arg-121 to produce the atrial natriuretic peptide. Undergoes further proteolytic cleavage by unknown proteases to give rise to long-acting natriuretic peptide, vessel dilator and kaliuretic peptide. Additional processing gives rise to the auriculin and atriopeptin peptides. In the kidneys, alternative processing by an unknown protease results in the peptide urodilatin. Cleavage by MME initiates degradation of the factor and thereby regulates its activity. Degradation by IDE results in reduced activation of NPR1 (in vitro). During IDE degradation, the resulting products can temporarily stimulate NPR2 to produce cGMP, before the fragments are completely degraded and inactivated by IDE (in vitro). Post-translationally, degraded by IDE. In terms of processing, phosphorylation on Ser-127 decreases vasorelaxant activity.

The protein resides in the secreted. Its subcellular location is the perikaryon. It localises to the cell projection. In terms of biological role, hormone that plays a key role in mediating cardio-renal homeostasis, and is involved in vascular remodeling and regulating energy metabolism. Acts by specifically binding and stimulating NPR1 to produce cGMP, which in turn activates effector proteins, such as PRKG1, that drive various biological responses. Regulates vasodilation, natriuresis, diuresis and aldosterone synthesis and is therefore essential for regulating blood pressure, controlling the extracellular fluid volume and maintaining the fluid-electrolyte balance. Also involved in inhibiting cardiac remodeling and cardiac hypertrophy by inducing cardiomyocyte apoptosis and attenuating the growth of cardiomyocytes and fibroblasts. Plays a role in female pregnancy by promoting trophoblast invasion and spiral artery remodeling in uterus, and thus prevents pregnancy-induced hypertension. In adipose tissue, acts in various cGMP- and PKG-dependent pathways to regulate lipid metabolism and energy homeostasis. This includes up-regulating lipid metabolism and mitochondrial oxygen utilization by activating the AMP-activated protein kinase (AMPK), and increasing energy expenditure by acting via MAPK11 to promote the UCP1-dependent thermogenesis of brown adipose tissue. Binds the clearance receptor NPR3 which removes the hormone from circulation. Its function is as follows. May have a role in cardio-renal homeostasis through regulation of natriuresis, diuresis, vasodilation, and inhibiting aldosterone synthesis. In vitro, promotes the production of cGMP and induces vasodilation. May promote natriuresis, at least in part, by enhancing prostaglandin E2 synthesis resulting in the inhibition of renal Na+-K+-ATPase. However reports on the involvement of this peptide in mammal blood volume and blood pressure homeostasis are conflicting; according to a report, in vivo it is not sufficient to activate cGMP and does not inhibit collecting duct transport nor effect diuresis and natriuresis. Appears to bind to specific receptors that are distinct from the receptors bound by atrial natriuretic peptide and vessel dilator. Possibly enhances protein excretion in urine by decreasing proximal tubular protein reabsorption. May have a role in cardio-renal homeostasis through regulation of natriuresis, diuresis, and vasodilation. In vitro, promotes the production of cGMP and induces vasodilation. May promote natriuresis, at least in part, by enhancing prostaglandin E2 synthesis resulting in the inhibition of renal Na+-K+-ATPase. However reports on the involvement of this peptide in mammal blood volume and blood pressure homeostasis are conflicting; according to a report it is not sufficient to activate cGMP and does not inhibit collecting duct transport nor effect diuresis and natriuresis. Appears to bind to specific receptors that are distinct from the receptors bound by the atrial natriuretic and long-acting natriuretic peptides. Possibly functions in protein excretion in urine by maintaining the integrity of the proximal tubules and enhancing protein excretion by decreasing proximal tubular protein reabsorption. Functionally, may have a role in cardio-renal homeostasis through regulation of diuresis and inhibiting aldosterone synthesis. In vitro, promotes the production of cGMP and induces vasodilation. May promote natriuresis, at least in part, by enhancing prostaglandin E2 synthesis resulting in the inhibition of renal Na+-K+-ATPase. May have a role in potassium excretion but not sodium excretion (natriuresis). Possibly enhances protein excretion in urine by decreasing proximal tubular protein reabsorption. In terms of biological role, hormone produced in the kidneys that appears to be important for maintaining cardio-renal homeostasis. Mediates vasodilation, natriuresis and diuresis primarily in the renal system, in order to maintain the extracellular fluid volume and control the fluid-electrolyte balance. Specifically binds and stimulates cGMP production by renal transmembrane receptors, likely NPR1. Urodilatin not ANP, may be the natriuretic peptide responsible for the regulation of sodium and water homeostasis in the kidney. Its function is as follows. May have a role in cardio-renal homeostasis through regulation of natriuresis and vasodilation. In vivo promotes natriuresis and in vitro, vasodilates renal artery strips. May have a role in cardio-renal homeostasis through regulation of regulation of natriuresis and vasodilation. In vivo promotes natriuresis. In vitro, vasodilates intestinal smooth muscle but not smooth muscle strips. Functionally, may have a role in cardio-renal homeostasis through regulation of natriuresis and vasodilation. In vivo promotes natriuresis. In vitro, selectively vasodilates intestinal and vascular smooth muscle strips. In terms of biological role, may have a role in cardio-renal homeostasis through regulation of natriuresis and vasodilation. In vivo promotes natriuresis. In vitro, selectively vasodilates intestinal smooth muscle but not vascular smooth muscle strips. In Canis lupus familiaris (Dog), this protein is Natriuretic peptides A (NPPA).